The following is a 417-amino-acid chain: Gamma-glutamyl phosphate reductase (417 aa).

The protein belongs to the gamma-glutamyl phosphate reductase family.

Its subcellular location is the cytoplasm. The catalysed reaction is L-glutamate 5-semialdehyde + phosphate + NADP(+) = L-glutamyl 5-phosphate + NADPH + H(+). The protein operates within amino-acid biosynthesis; L-proline biosynthesis; L-glutamate 5-semialdehyde from L-glutamate: step 2/2. Functionally, catalyzes the NADPH-dependent reduction of L-glutamate 5-phosphate into L-glutamate 5-semialdehyde and phosphate. The product spontaneously undergoes cyclization to form 1-pyrroline-5-carboxylate. This is Gamma-glutamyl phosphate reductase from Streptococcus agalactiae serotype Ia (strain ATCC 27591 / A909 / CDC SS700).